A 402-amino-acid polypeptide reads, in one-letter code: CCA-adding enzyme (402 aa).

Residues Gly-32 and Arg-35 each coordinate ATP. The CTP site is built by Gly-32 and Arg-35. Mg(2+)-binding residues include Asp-45 and Asp-47. Arg-116, Asp-159, Arg-162, Arg-165, and Arg-168 together coordinate ATP. Residues Arg-116, Asp-159, Arg-162, Arg-165, and Arg-168 each contribute to the CTP site.

This sequence belongs to the tRNA nucleotidyltransferase/poly(A) polymerase family. Bacterial CCA-adding enzyme type 3 subfamily. In terms of assembly, homodimer. Requires Mg(2+) as cofactor.

The catalysed reaction is a tRNA precursor + 2 CTP + ATP = a tRNA with a 3' CCA end + 3 diphosphate. It catalyses the reaction a tRNA with a 3' CCA end + 2 CTP + ATP = a tRNA with a 3' CCACCA end + 3 diphosphate. Catalyzes the addition and repair of the essential 3'-terminal CCA sequence in tRNAs without using a nucleic acid template. Adds these three nucleotides in the order of C, C, and A to the tRNA nucleotide-73, using CTP and ATP as substrates and producing inorganic pyrophosphate. tRNA 3'-terminal CCA addition is required both for tRNA processing and repair. Also involved in tRNA surveillance by mediating tandem CCA addition to generate a CCACCA at the 3' terminus of unstable tRNAs. While stable tRNAs receive only 3'-terminal CCA, unstable tRNAs are marked with CCACCA and rapidly degraded. The sequence is that of CCA-adding enzyme from Streptococcus pyogenes serotype M3 (strain ATCC BAA-595 / MGAS315).